Here is a 329-residue protein sequence, read N- to C-terminus: Flotillin-like protein FloA (329 aa).

Transmembrane regions (helical) follow at residues 4–24 (IAFI…FAIV) and 26–46 (VGLW…TLIG).

It belongs to the flotillin-like FloA family. In terms of assembly, homooligomerizes.

Its subcellular location is the cell membrane. The protein resides in the membrane raft. Found in functional membrane microdomains (FMM) that may be equivalent to eukaryotic membrane rafts. FMMs are highly dynamic and increase in number as cells age. Flotillins are thought to be important factors in membrane fluidity. The polypeptide is Flotillin-like protein FloA (Acetivibrio thermocellus (strain ATCC 27405 / DSM 1237 / JCM 9322 / NBRC 103400 / NCIMB 10682 / NRRL B-4536 / VPI 7372) (Clostridium thermocellum)).